Reading from the N-terminus, the 316-residue chain is Sorting nexin-20 (316 aa).

The tract at residues 1–57 (MASHKHPGSPGWTGPICQDMAGTTPKASAPRPDLPRPGPEDHLEAQGSPSSNSSMTT) is disordered. S3 carries the post-translational modification Phosphoserine. Polar residues predominate over residues 47–57 (GSPSSNSSMTT). A PX domain is found at 74-191 (VKLLFEIASA…DFLTRPELKE (118 aa)). Positions 116, 118, 143, and 157 each coordinate a 1,2-diacyl-sn-glycero-3-phospho-(1D-myo-inositol-3-phosphate).

It belongs to the sorting nexin family. As to quaternary structure, interacts with SELPLG. Interaction with SELPLG is controversial.

Its subcellular location is the early endosome membrane. It localises to the cell membrane. It is found in the cytoplasm. The protein localises to the nucleus. In terms of biological role, may play a role in cellular vesicle trafficking. Has been proposed to function as a sorting protein that targets SELPLG into endosomes, but has no effect on SELPLG internalization from the cell surface, or on SELPLG-mediated cell-cell adhesion. This chain is Sorting nexin-20 (SNX20), found in Bos taurus (Bovine).